A 576-amino-acid chain; its full sequence is Adenine deaminase (576 aa).

It belongs to the metallo-dependent hydrolases superfamily. Adenine deaminase family. Mn(2+) serves as cofactor.

It carries out the reaction adenine + H2O + H(+) = hypoxanthine + NH4(+). The chain is Adenine deaminase from Syntrophobacter fumaroxidans (strain DSM 10017 / MPOB).